A 169-amino-acid chain; its full sequence is U3 small nucleolar ribonucleoprotein protein imp3 (169 aa).

The 58-residue stretch at 109 to 166 (RRLPVVMCRLKMCETVSTSVKYVEHGHVRVGPEVITDPAFFVTRNMEDFVTWVDSSKI) folds into the S4 RNA-binding domain.

This sequence belongs to the universal ribosomal protein uS4 family. As to quaternary structure, component of a heterotrimeric complex containing imp3, imp4 and mpp10.

It is found in the nucleus. The protein localises to the nucleolus. Component of the U3 small nucleolar ribonucleoprotein. Required for the early cleavages at sites A0, A1 and A2 during 18S ribosomal pre-RNA processing. In Pneumocystis carinii, this protein is U3 small nucleolar ribonucleoprotein protein imp3 (RBP).